The primary structure comprises 396 residues: Phosphoglycerate kinase (396 aa).

Residues 21–23 (DFN), R37, 60–63 (HLGR), R121, and R154 contribute to the substrate site. ATP contacts are provided by residues K205, G296, E327, and 353–356 (GGDS).

Belongs to the phosphoglycerate kinase family. In terms of assembly, monomer.

It localises to the cytoplasm. The enzyme catalyses (2R)-3-phosphoglycerate + ATP = (2R)-3-phospho-glyceroyl phosphate + ADP. It functions in the pathway carbohydrate degradation; glycolysis; pyruvate from D-glyceraldehyde 3-phosphate: step 2/5. The chain is Phosphoglycerate kinase from Anaeromyxobacter dehalogenans (strain 2CP-C).